We begin with the raw amino-acid sequence, 323 residues long: Mitochondrial glutamate carrier 1 (323 aa).

3 Solcar repeats span residues 6 to 93, 101 to 214, and 223 to 312; these read ISLP…FRHQ, LTLL…LNQL, and SPFY…GIAE. Helical transmembrane passes span 12-32, 62-82, 107-127, 189-209, 223-243, and 292-312; these read LINGGIAGLIGVTCVFPIDLA, YFGMYRGAAVNLTLVTPEKAI, MLAGCGAGTCQVIVTTPMEML, GLGATLLRDVPFSVVYFPLFA, SPFYVSFLAGCVAGSAAAVAV, and ALVIAPLFGIAQVVYFLGIAE.

The protein belongs to the mitochondrial carrier (TC 2.A.29) family. As to expression, expressed at high levels in brain, liver, and pancreas.

It is found in the mitochondrion inner membrane. The enzyme catalyses L-glutamate(in) + H(+)(in) = L-glutamate(out) + H(+)(out). Mitochondrial glutamate/H(+) symporter. Responsible for the transport of glutamate from the cytosol into the mitochondrial matrix with the concomitant import of a proton. Plays a role in the control of glucose-stimulated insulin secretion. This chain is Mitochondrial glutamate carrier 1, found in Homo sapiens (Human).